Reading from the N-terminus, the 232-residue chain is Flagellar L-ring protein (232 aa).

An N-terminal signal peptide occupies residues 1–21 (MQKYALHAYPVMALMVATLTG). Cysteine 22 carries the N-palmitoyl cysteine lipid modification. Cysteine 22 carries S-diacylglycerol cysteine lipidation.

This sequence belongs to the FlgH family. The basal body constitutes a major portion of the flagellar organelle and consists of four rings (L,P,S, and M) mounted on a central rod.

It localises to the cell outer membrane. The protein localises to the bacterial flagellum basal body. Functionally, assembles around the rod to form the L-ring and probably protects the motor/basal body from shearing forces during rotation. The sequence is that of Flagellar L-ring protein from Salmonella choleraesuis (strain SC-B67).